Here is a 177-residue protein sequence, read N- to C-terminus: Olfactory protein (177 aa).

The N-terminal stretch at 1–17 (MIRIIAIVVLFFLQCQA) is a signal peptide. A disulfide bridge links Cys81 with Cys174.

It belongs to the calycin superfamily. Lipocalin family. Synthesized in Bowman glands, which secrete the mucus that bathes the cilia of the olfactory neuroepithelium.

The protein resides in the secreted. The sequence is that of Olfactory protein from Lithobates pipiens (Northern leopard frog).